A 93-amino-acid chain; its full sequence is Acylphosphatase (93 aa).

The Acylphosphatase-like domain occupies 5-93 (CIIAWVHGRV…EELTGFRIRY (89 aa)). Catalysis depends on residues arginine 20 and asparagine 38.

It belongs to the acylphosphatase family.

The catalysed reaction is an acyl phosphate + H2O = a carboxylate + phosphate + H(+). The sequence is that of Acylphosphatase (acyP) from Citrobacter koseri (strain ATCC BAA-895 / CDC 4225-83 / SGSC4696).